Here is a 432-residue protein sequence, read N- to C-terminus: Putative D-alanyl-D-alanine carboxypeptidase (432 aa).

The chain crosses the membrane as a helical; Signal-anchor span at residues 7 to 25; that stretch reads ATVLLTFSLSAFAVEYPVL.

It belongs to the peptidase S12 family. YfeW subfamily.

The protein resides in the cell inner membrane. The catalysed reaction is Preferential cleavage: (Ac)2-L-Lys-D-Ala-|-D-Ala. Also transpeptidation of peptidyl-alanyl moieties that are N-acyl substituents of D-alanine.. This chain is Putative D-alanyl-D-alanine carboxypeptidase, found in Salmonella heidelberg (strain SL476).